A 308-amino-acid chain; its full sequence is Elongation factor Ts (308 aa).

The tract at residues 80 to 83 is involved in Mg(2+) ion dislocation from EF-Tu; it reads TDFV.

It belongs to the EF-Ts family.

It localises to the cytoplasm. Its function is as follows. Associates with the EF-Tu.GDP complex and induces the exchange of GDP to GTP. It remains bound to the aminoacyl-tRNA.EF-Tu.GTP complex up to the GTP hydrolysis stage on the ribosome. This chain is Elongation factor Ts, found in Rhizobium leguminosarum bv. trifolii (strain WSM2304).